The sequence spans 1157 residues: Folliculin-interacting protein 1 (1157 aa).

A uDENN FNIP1/2-type domain is found at 37–467 (FDPSQIRLIV…TVMPNGQPPI (431 aa)). Disordered stretches follow at residues 92–120 (PGGDSSSSLDSSINSSSSFSDAKEQCPKY), 616–665 (SQQE…TKVE), 769–796 (SPPTAEEGVSADQNCEAKQTVEDQNRDC), and 904–955 (VPHG…NYYG). A compositionally biased stretch (low complexity) spans 95–111 (DSSSSLDSSINSSSSFS). One can recognise a cDENN FNIP1/2-type domain in the interval 475 to 1083 (SSQSVDMLAK…VSNLLHSTLQ (609 aa)). A compositionally biased stretch (basic and acidic residues) spans 651 to 664 (ADGHQPRTCQDTKV). Residues 904–916 (VPHGDRENAEKKV) are compositionally biased toward basic and acidic residues. In terms of domain architecture, dDENN FNIP1/2-type spans 1093–1148 (FCVMHLEDRLQELYFKSKMLSEYLKGQMRVHVKELGVVLGIESSDLPLLAAVASTH).

It belongs to the FNIP family. In terms of assembly, homodimer and homomultimer. Heterodimer and heteromultimer with FNIP2. Component of the lysosomal folliculin complex (LFC).

The protein localises to the lysosome membrane. It is found in the cytoplasm. It localises to the cytosol. Its function is as follows. Binding partner of the GTPase-activating protein FLCN: involved in the cellular response to amino acid availability by regulating the non-canonical mTORC1 signaling cascade controlling the MiT/TFE factors TFEB and TFE3. Required to promote FLCN recruitment to lysosomes and interaction with Rag GTPases, leading to activation of the non-canonical mTORC1 signaling. In low-amino acid conditions, component of the lysosomal folliculin complex (LFC) on the membrane of lysosomes, which inhibits the GTPase-activating activity of FLCN, thereby inactivating mTORC1 and promoting nuclear translocation of TFEB and TFE3. Upon amino acid restimulation, disassembly of the LFC complex liberates the GTPase-activating activity of FLCN, leading to activation of mTORC1 and subsequent inactivation of TFEB and TFE3. In addition to its role in mTORC1 signaling, also acts as a co-chaperone of HSP90AA1/Hsp90: inhibits the ATPase activity of HSP90AA1/Hsp90, leading to activate both kinase and non-kinase client proteins of HSP90AA1/Hsp90. Acts as a scaffold to load client protein FLCN onto HSP90AA1/Hsp90. The chain is Folliculin-interacting protein 1 from Gallus gallus (Chicken).